Reading from the N-terminus, the 105-residue chain is uncharacterized protein (105 aa).

The 68-residue stretch at 33–100 (LYALDAGTTD…SEDLRVLVVF (68 aa)) folds into the Cupin type-2 domain.

This is an uncharacterized protein from Streptomyces coelicolor (strain ATCC BAA-471 / A3(2) / M145).